We begin with the raw amino-acid sequence, 224 residues long: Serum amyloid P-component (224 aa).

An N-terminal signal peptide occupies residues 1–19 (MERLLLWVSVLASLPEAFA). One can recognise a Pentraxin (PTX) domain in the interval 24–224 (TGKVFVFPRE…YVVIKPRVWS (201 aa)). A glycan (N-linked (GlcNAc...) asparagine) is linked at N51. C55 and C114 are joined by a disulfide. The Ca(2+) site is built by D77, N78, E155, Q156, D157, and Q167.

Belongs to the pentraxin family. In terms of assembly, homopentamer. Pentraxin (or pentaxin) have a discoid arrangement of 5 non-covalently bound subunits. The cofactor is Ca(2+).

It is found in the secreted. The polypeptide is Serum amyloid P-component (APCS) (Sus scrofa (Pig)).